Reading from the N-terminus, the 245-residue chain is Uroporphyrinogen-III C-methyltransferase (245 aa).

S-adenosyl-L-homocysteine-binding positions include proline 12, 87–89, 117–118, methionine 168, alanine 197, and alanine 225; these read GGD and TA.

Belongs to the precorrin methyltransferase family.

It carries out the reaction uroporphyrinogen III + 2 S-adenosyl-L-methionine = precorrin-2 + 2 S-adenosyl-L-homocysteine + H(+). The protein operates within cofactor biosynthesis; adenosylcobalamin biosynthesis; precorrin-2 from uroporphyrinogen III: step 1/1. Its pathway is porphyrin-containing compound metabolism; siroheme biosynthesis; precorrin-2 from uroporphyrinogen III: step 1/1. Its function is as follows. Catalyzes the two successive C-2 and C-7 methylation reactions involved in the conversion of uroporphyrinogen III to precorrin-2 via the intermediate formation of precorrin-1. It is a step in the biosynthesis of both cobalamin (vitamin B12) and siroheme. This chain is Uroporphyrinogen-III C-methyltransferase (cobA), found in Pseudomonas aeruginosa (strain ATCC 15692 / DSM 22644 / CIP 104116 / JCM 14847 / LMG 12228 / 1C / PRS 101 / PAO1).